Here is a 539-residue protein sequence, read N- to C-terminus: Eukaryotic translation initiation factor 3 subunit L (539 aa).

One can recognise a PCI domain in the interval 306–514 (TFSDILLYVQ…IHIADTKVSH (209 aa)).

This sequence belongs to the eIF-3 subunit L family. Component of the eukaryotic translation initiation factor 3 (eIF-3) complex. The eIF-3 complex interacts with pix.

It is found in the cytoplasm. Component of the eukaryotic translation initiation factor 3 (eIF-3) complex, which is involved in protein synthesis of a specialized repertoire of mRNAs and, together with other initiation factors, stimulates binding of mRNA and methionyl-tRNAi to the 40S ribosome. The eIF-3 complex specifically targets and initiates translation of a subset of mRNAs involved in cell proliferation. The polypeptide is Eukaryotic translation initiation factor 3 subunit L (Drosophila willistoni (Fruit fly)).